We begin with the raw amino-acid sequence, 86 residues long: Small ribosomal subunit protein uS15 (86 aa).

It belongs to the universal ribosomal protein uS15 family. As to quaternary structure, part of the 30S ribosomal subunit. Forms a bridge to the 50S subunit in the 70S ribosome, contacting the 23S rRNA.

One of the primary rRNA binding proteins, it binds directly to 16S rRNA where it helps nucleate assembly of the platform of the 30S subunit by binding and bridging several RNA helices of the 16S rRNA. In terms of biological role, forms an intersubunit bridge (bridge B4) with the 23S rRNA of the 50S subunit in the ribosome. This Mycoplasma pneumoniae (strain ATCC 29342 / M129 / Subtype 1) (Mycoplasmoides pneumoniae) protein is Small ribosomal subunit protein uS15.